The following is a 168-amino-acid chain: Crossover junction endodeoxyribonuclease RuvC (168 aa).

Catalysis depends on residues Asp7, Glu66, and Asp138. Mg(2+)-binding residues include Asp7, Glu66, and Asp138.

It belongs to the RuvC family. As to quaternary structure, homodimer which binds Holliday junction (HJ) DNA. The HJ becomes 2-fold symmetrical on binding to RuvC with unstacked arms; it has a different conformation from HJ DNA in complex with RuvA. In the full resolvosome a probable DNA-RuvA(4)-RuvB(12)-RuvC(2) complex forms which resolves the HJ. Requires Mg(2+) as cofactor.

It is found in the cytoplasm. The enzyme catalyses Endonucleolytic cleavage at a junction such as a reciprocal single-stranded crossover between two homologous DNA duplexes (Holliday junction).. In terms of biological role, the RuvA-RuvB-RuvC complex processes Holliday junction (HJ) DNA during genetic recombination and DNA repair. Endonuclease that resolves HJ intermediates. Cleaves cruciform DNA by making single-stranded nicks across the HJ at symmetrical positions within the homologous arms, yielding a 5'-phosphate and a 3'-hydroxyl group; requires a central core of homology in the junction. The consensus cleavage sequence is 5'-(A/T)TT(C/G)-3'. Cleavage occurs on the 3'-side of the TT dinucleotide at the point of strand exchange. HJ branch migration catalyzed by RuvA-RuvB allows RuvC to scan DNA until it finds its consensus sequence, where it cleaves and resolves the cruciform DNA. The chain is Crossover junction endodeoxyribonuclease RuvC from Cereibacter sphaeroides (strain ATCC 17023 / DSM 158 / JCM 6121 / CCUG 31486 / LMG 2827 / NBRC 12203 / NCIMB 8253 / ATH 2.4.1.) (Rhodobacter sphaeroides).